A 784-amino-acid chain; its full sequence is LPS-assembly protein LptD (784 aa).

The first 24 residues, 1–24, serve as a signal peptide directing secretion; the sequence is MKKRIPTLLATMIASALYSHQGLA. 2 disulfides stabilise this stretch: Cys-31-Cys-724 and Cys-173-Cys-725.

It belongs to the LptD family. As to quaternary structure, component of the lipopolysaccharide transport and assembly complex. Interacts with LptE and LptA. In terms of processing, contains two intramolecular disulfide bonds.

Its subcellular location is the cell outer membrane. Functionally, together with LptE, is involved in the assembly of lipopolysaccharide (LPS) at the surface of the outer membrane. The polypeptide is LPS-assembly protein LptD (Salmonella paratyphi A (strain ATCC 9150 / SARB42)).